Here is a 215-residue protein sequence, read N- to C-terminus: Probable phosphoglycerate mutase GpmB (215 aa).

Substrate-binding positions include 8–15 (RHGETQWN), 21–22 (QG), Arg58, Lys60, 82–85 (ELDM), 104–105 (RR), and 151–152 (GI). The Tele-phosphohistidine intermediate role is filled by His9. Glu82 (proton donor/acceptor) is an active-site residue.

This sequence belongs to the phosphoglycerate mutase family. GpmB subfamily.

The catalysed reaction is (2R)-2-phosphoglycerate = (2R)-3-phosphoglycerate. The protein operates within carbohydrate degradation; glycolysis; pyruvate from D-glyceraldehyde 3-phosphate: step 3/5. The chain is Probable phosphoglycerate mutase GpmB from Salmonella arizonae (strain ATCC BAA-731 / CDC346-86 / RSK2980).